The primary structure comprises 194 residues: Histone H1.0 (194 aa).

Residue Met-1 is modified to N-acetylmethionine. The span at 1-11 (MTENSTSAPAA) shows a compositional bias: low complexity. Positions 1-29 (MTENSTSAPAAKPKRAKASKKSTDHPKYS) are disordered. Thr-2 carries the post-translational modification N-acetylthreonine; partial; in Histone H1.0, N-terminally processed. A Deamidated asparagine; partial modification is found at Asn-4. Positions 24 to 97 (DHPKYSDMIV…GASGSFRLAK (74 aa)) constitute an H15 domain. Arg-42 is subject to Citrulline. The tract at residues 84–194 (TKGVGASGSF…SSAKRAGKKK (111 aa)) is disordered. Ser-104 carries the post-translational modification ADP-ribosylserine. Residues 105 to 194 (VAFKKTKKEI…SSAKRAGKKK (90 aa)) show a composition bias toward basic residues.

This sequence belongs to the histone H1/H5 family. Post-translationally, phosphorylated on Ser-17 in RNA edited version. ADP-ribosylated on Ser-104 in response to DNA damage.

The protein resides in the nucleus. Its subcellular location is the chromosome. Functionally, histones H1 are necessary for the condensation of nucleosome chains into higher-order structures. The histones H1.0 are found in cells that are in terminal stages of differentiation or that have low rates of cell division. This is Histone H1.0 from Homo sapiens (Human).